Consider the following 503-residue polypeptide: Pentatricopeptide repeat-containing protein At2g30100, chloroplastic (503 aa).

The N-terminal 50 residues, 1–50 (MAYAHVFASLTISTISLRRFLPRLHRNHSVKPNSRIICNLKLNYSAGKFR), are a transit peptide targeting the chloroplast. 3 PPR repeats span residues 341–375 (IGVVHERLLAMYICAGRGPEAEKQLWKMKLAGREP), 376–410 (EADLHDIVMAICASQKEVNAVSRLLTRVEFMGSQR), and 411–445 (KKKTLSWLLRGYVKGGHFEEAAETLVSMIDSGLHP).

The protein belongs to the PPR family. P subfamily.

The protein resides in the plastid. It is found in the chloroplast. The protein is Pentatricopeptide repeat-containing protein At2g30100, chloroplastic of Arabidopsis thaliana (Mouse-ear cress).